The chain runs to 1085 residues: Error-prone DNA polymerase 2 (1085 aa).

Positions 1040-1066 (AGRGDEFAHGGGGPDSRDRQKPVVPRD) are disordered.

It belongs to the DNA polymerase type-C family. DnaE2 subfamily.

It localises to the cytoplasm. The enzyme catalyses DNA(n) + a 2'-deoxyribonucleoside 5'-triphosphate = DNA(n+1) + diphosphate. DNA polymerase involved in damage-induced mutagenesis and translesion synthesis (TLS). It is not the major replicative DNA polymerase. This Agrobacterium fabrum (strain C58 / ATCC 33970) (Agrobacterium tumefaciens (strain C58)) protein is Error-prone DNA polymerase 2.